A 220-amino-acid chain; its full sequence is Tumor protein D54 (220 aa).

An N-acetylmethionine modification is found at Met-1. Ser-3, Ser-12, and Ser-19 each carry phosphoserine. Positions 40 to 82 form a coiled coil; that stretch reads GLTEGEEEELRAELAKVEEEIVTLRQVLAAKERHCGELKRRLG. Phosphoserine occurs at positions 96, 149, 168, and 175. The residue at position 177 (Thr-177) is a Phosphothreonine. Position 180 is a phosphoserine (Ser-180). Thr-187 carries the phosphothreonine modification. The segment at 189-220 is disordered; the sequence is KSKVVGGRENGSDNLPPSPGSGDQTLPDHAPF. Phosphoserine is present on residues Ser-206 and Ser-209.

Belongs to the TPD52 family. Forms a homodimer or heterodimer with other members of the family. Interacts with MAL2.

The polypeptide is Tumor protein D54 (Tpd52l2) (Mus musculus (Mouse)).